The primary structure comprises 387 residues: Cysteine desulfurase IscS (387 aa).

Pyridoxal 5'-phosphate-binding positions include 73-74, asparagine 155, glutamine 183, and 203-205; these read AT and SAH. Lysine 206 carries the post-translational modification N6-(pyridoxal phosphate)lysine. Threonine 241 is a binding site for pyridoxal 5'-phosphate. Cysteine 328 serves as the catalytic Cysteine persulfide intermediate. Cysteine 328 lines the [2Fe-2S] cluster pocket.

This sequence belongs to the class-V pyridoxal-phosphate-dependent aminotransferase family. NifS/IscS subfamily. Homodimer. Forms a heterotetramer with IscU, interacts with other sulfur acceptors. Pyridoxal 5'-phosphate is required as a cofactor.

Its subcellular location is the cytoplasm. The catalysed reaction is (sulfur carrier)-H + L-cysteine = (sulfur carrier)-SH + L-alanine. It participates in cofactor biosynthesis; iron-sulfur cluster biosynthesis. Its function is as follows. Master enzyme that delivers sulfur to a number of partners involved in Fe-S cluster assembly, tRNA modification or cofactor biosynthesis. Catalyzes the removal of elemental sulfur atoms from cysteine to produce alanine. Functions as a sulfur delivery protein for Fe-S cluster synthesis onto IscU, an Fe-S scaffold assembly protein, as well as other S acceptor proteins. This Helicobacter pylori (strain P12) protein is Cysteine desulfurase IscS.